The primary structure comprises 472 residues: Zinc finger and BTB domain-containing protein 18.2 (472 aa).

In terms of domain architecture, BTB spans 24–91; the sequence is CDCTVLVGEA…MYEGKLEFSN (68 aa). Residues 127-149 show a composition bias toward basic and acidic residues; the sequence is KIIDDGEKDDKPVDSEEHHEHSF. 3 disordered regions span residues 127–155, 197–236, and 269–334; these read KIID…SQQK, AGKT…FKPM, and DLLS…LSTS. Residues 205 to 215 are compositionally biased toward low complexity; it reads SSPSSPLSQRS. Residues 279 to 288 are compositionally biased toward polar residues; that stretch reads AKSPKSQQVG. Residues 309–319 show a composition bias toward basic and acidic residues; sequence HTREDDLYQDR. 4 consecutive C2H2-type zinc fingers follow at residues 344 to 366, 384 to 406, 412 to 434, and 440 to 463; these read CICP…LSSH, PTCT…ERTH, FTCG…AVVH, and HACK…RKFH.

This sequence belongs to the krueppel C2H2-type zinc-finger protein family. ZBTB18 subfamily.

It is found in the nucleus. Transcriptional repressor that plays a role in various developmental processes. Specifically binds the consensus DNA sequence 5'-[AC]ACATCTG[GT][AC]-3' which contains the E box core, and acts by recruiting chromatin remodeling multiprotein complexes. This Xenopus laevis (African clawed frog) protein is Zinc finger and BTB domain-containing protein 18.2 (zbtb18.2).